The following is a 99-amino-acid chain: Aspartyl/glutamyl-tRNA(Asn/Gln) amidotransferase subunit C (99 aa).

The protein belongs to the GatC family. As to quaternary structure, heterotrimer of A, B and C subunits.

The enzyme catalyses L-glutamyl-tRNA(Gln) + L-glutamine + ATP + H2O = L-glutaminyl-tRNA(Gln) + L-glutamate + ADP + phosphate + H(+). It catalyses the reaction L-aspartyl-tRNA(Asn) + L-glutamine + ATP + H2O = L-asparaginyl-tRNA(Asn) + L-glutamate + ADP + phosphate + 2 H(+). Functionally, allows the formation of correctly charged Asn-tRNA(Asn) or Gln-tRNA(Gln) through the transamidation of misacylated Asp-tRNA(Asn) or Glu-tRNA(Gln) in organisms which lack either or both of asparaginyl-tRNA or glutaminyl-tRNA synthetases. The reaction takes place in the presence of glutamine and ATP through an activated phospho-Asp-tRNA(Asn) or phospho-Glu-tRNA(Gln). The sequence is that of Aspartyl/glutamyl-tRNA(Asn/Gln) amidotransferase subunit C from Burkholderia lata (strain ATCC 17760 / DSM 23089 / LMG 22485 / NCIMB 9086 / R18194 / 383).